Consider the following 377-residue polypeptide: Probable transposase for insertion sequence element IS5377 (377 aa).

This sequence belongs to the transposase 11 family.

In Geobacillus stearothermophilus (Bacillus stearothermophilus), this protein is Probable transposase for insertion sequence element IS5377.